We begin with the raw amino-acid sequence, 244 residues long: MKQNNKKPLPSKTKEISLETDWIDVIETMRETNESPKSQNPSEEATTVNELSCEAKPKLLFTPTKSSLSIGNFPYKEFDPVLKFPGIHYTYSRERLWGTCVILSTLFWSYYVLSNSELLEFEASEYSLLFILIIALDALLTVSLFGLFHHLMFLTTNYSYTINSTLDISKGFFINVLSTMVQALVTVTIAFTKFVTIDFPIYVFSSLFLYHPLSRSRQLPTKMQLDGSGERKTDSSLVHQNPPN.

Positions 30 to 49 (RETNESPKSQNPSEEATTVN) are disordered. The span at 35-49 (SPKSQNPSEEATTVN) shows a compositional bias: polar residues. 4 consecutive transmembrane segments (helical) span residues 96 to 116 (LWGT…LSNS), 128 to 148 (LLFI…FGLF), 171 to 191 (GFFI…TIAF), and 194 to 214 (FVTI…HPLS). The disordered stretch occupies residues 224-244 (QLDGSGERKTDSSLVHQNPPN). A compositionally biased stretch (polar residues) spans 235–244 (SSLVHQNPPN).

It localises to the nucleus membrane. This is an uncharacterized protein from Schizosaccharomyces pombe (strain 972 / ATCC 24843) (Fission yeast).